The following is a 706-amino-acid chain: Fatty acid oxidation complex subunit alpha (706 aa).

The enoyl-CoA hydratase stretch occupies residues 1 to 188; the sequence is MDKSFTLNRL…KMGLVDDVVP (188 aa). The segment at 308–706 is 3-hydroxyacyl-CoA dehydrogenase; that stretch reads KAVNKVMVLG…MAESGSKFYE (399 aa).

In the N-terminal section; belongs to the enoyl-CoA hydratase/isomerase family. It in the central section; belongs to the 3-hydroxyacyl-CoA dehydrogenase family. As to quaternary structure, heterotetramer of two alpha chains (FadJ) and two beta chains (FadI).

The protein resides in the cytoplasm. The enzyme catalyses a (3S)-3-hydroxyacyl-CoA = a (2E)-enoyl-CoA + H2O. The catalysed reaction is a 4-saturated-(3S)-3-hydroxyacyl-CoA = a (3E)-enoyl-CoA + H2O. It carries out the reaction a (3S)-3-hydroxyacyl-CoA + NAD(+) = a 3-oxoacyl-CoA + NADH + H(+). It catalyses the reaction (3S)-3-hydroxybutanoyl-CoA = (3R)-3-hydroxybutanoyl-CoA. It participates in lipid metabolism; fatty acid beta-oxidation. Functionally, catalyzes the formation of a hydroxyacyl-CoA by addition of water on enoyl-CoA. Also exhibits 3-hydroxyacyl-CoA epimerase and 3-hydroxyacyl-CoA dehydrogenase activities. This is Fatty acid oxidation complex subunit alpha from Shewanella loihica (strain ATCC BAA-1088 / PV-4).